We begin with the raw amino-acid sequence, 675 residues long: Genome polyprotein (675 aa).

Residues 92–216 form the RdRp catalytic domain; that stretch reads WVYCDADGSQ…AIHPDHEHVL (125 aa). Positions 390–424 are enriched in basic and acidic residues; that stretch reads KNEAVDTGLNEKFKEKEKQKEKEKEKQKEKEKDDA. Positions 390–447 are disordered; it reads KNEAVDTGLNEKFKEKEKQKEKEKEKQKEKEKDDASDGNDVSTSTKTGERDRDVNVGT.

It belongs to the potyviridae genome polyprotein family. Post-translationally, genome polyprotein of potyviruses undergoes post-translational proteolytic processing by the main proteinase NIa-pro resulting in the production of at least ten individual proteins. The P1 proteinase and the HC-pro cleave only their respective C-termini autocatalytically. 6K1 is essential for proper proteolytic separation of P3 from CI.

The protein localises to the virion. It catalyses the reaction RNA(n) + a ribonucleoside 5'-triphosphate = RNA(n+1) + diphosphate. Functionally, an RNA-dependent RNA polymerase that plays an essential role in the virus replication. Its function is as follows. Involved in aphid transmission, cell-to-cell and systemis movement, encapsidation of the viral RNA and in the regulation of viral RNA amplification. The sequence is that of Genome polyprotein from Papaya ringspot virus (strain W).